Reading from the N-terminus, the 396-residue chain is Adenylyltransferase and sulfurtransferase UBA4 (396 aa).

Residues Gly51, Asp72, 79-83 (SNLHR), Lys95, and 139-140 (DG) contribute to the ATP site. Zn(2+) is bound by residues Cys180 and Cys183. Cys197 functions as the Glycyl thioester intermediate; for adenylyltransferase activity in the catalytic mechanism. 2 residues coordinate Zn(2+): Cys257 and Cys260. One can recognise a Rhodanese domain in the interval 305 to 394 (VSTKHILLDV…WAKNVDEKFP (90 aa)). Cys355 (cysteine persulfide intermediate; for sulfurtransferase activity) is an active-site residue.

It in the N-terminal section; belongs to the HesA/MoeB/ThiF family. UBA4 subfamily. It depends on Zn(2+) as a cofactor.

Its subcellular location is the cytoplasm. The protein resides in the cytosol. It participates in tRNA modification; 5-methoxycarbonylmethyl-2-thiouridine-tRNA biosynthesis. Plays a central role in 2-thiolation of mcm(5)S(2)U at tRNA wobble positions of cytosolic tRNA(Lys), tRNA(Glu) and tRNA(Gln). Acts by mediating the C-terminal thiocarboxylation of sulfur carrier URM1. Its N-terminus first activates URM1 as acyl-adenylate (-COAMP), then the persulfide sulfur on the catalytic cysteine is transferred to URM1 to form thiocarboxylation (-COSH) of its C-terminus. The reaction probably involves hydrogen sulfide that is generated from the persulfide intermediate and that acts as a nucleophile towards URM1. Subsequently, a transient disulfide bond is formed. Does not use thiosulfate as sulfur donor; NFS1 probably acting as a sulfur donor for thiocarboxylation reactions. Prior mcm(5) tRNA modification by the elongator complex is required for 2-thiolation. May also be involved in protein urmylation. The protein is Adenylyltransferase and sulfurtransferase UBA4 of Yarrowia lipolytica (strain CLIB 122 / E 150) (Yeast).